The primary structure comprises 401 residues: Elongation factor Tu 2 (401 aa).

The region spanning 10-209 (KPHVNVGTIG…AVDEYIPTPV (200 aa)) is the tr-type G domain. A G1 region spans residues 19–26 (GHVDHGKT). Residue 19–26 (GHVDHGKT) coordinates GTP. A Mg(2+)-binding site is contributed by threonine 26. The interval 60 to 64 (GITIA) is G2. The G3 stretch occupies residues 81 to 84 (DCPG). GTP contacts are provided by residues 81–85 (DCPGH) and 136–139 (NKVD). The G4 stretch occupies residues 136-139 (NKVD). Residues 174 to 176 (SAL) form a G5 region.

It belongs to the TRAFAC class translation factor GTPase superfamily. Classic translation factor GTPase family. EF-Tu/EF-1A subfamily. In terms of assembly, monomer.

Its subcellular location is the cytoplasm. The catalysed reaction is GTP + H2O = GDP + phosphate + H(+). In terms of biological role, GTP hydrolase that promotes the GTP-dependent binding of aminoacyl-tRNA to the A-site of ribosomes during protein biosynthesis. This chain is Elongation factor Tu 2, found in Roseiflexus castenholzii (strain DSM 13941 / HLO8).